The chain runs to 1024 residues: Translation initiation factor IF-2 (1024 aa).

A disordered region spans residues 33 to 425 (SHMSSLEDDT…GRVKKTKTMK (393 aa)). 4 stretches are compositionally biased toward basic and acidic residues: residues 43-62 (EARV…DTRV), 135-148 (TPED…ELKP), 167-198 (TPAK…KETS), and 223-263 (SKPD…KEVR). A compositionally biased stretch (polar residues) spans 316 to 325 (EATQAPTSPQ). The segment covering 332-350 (KPADKGPARAQAHRPDTGR) has biased composition (basic and acidic residues). The segment covering 365-375 (RSKKKEWKKKG) has biased composition (basic residues). The segment covering 394–406 (SVVEGKDLYEKGR) has biased composition (basic and acidic residues). A compositionally biased stretch (basic residues) spans 407–423 (SGKKGRRKDGRVKKTKT). In terms of domain architecture, tr-type G spans 518–687 (SRPPVVTIMG…LLQSEVLELK (170 aa)). The interval 527-534 (GHVDHGKT) is G1. 527-534 (GHVDHGKT) serves as a coordination point for GTP. Positions 552 to 556 (GITQH) are G2. Residues 573 to 576 (DTPG) are G3. GTP contacts are provided by residues 573–577 (DTPGH) and 627–630 (NKMD). The segment at 627 to 630 (NKMD) is G4. Residues 663–665 (SAK) form a G5 region.

It belongs to the TRAFAC class translation factor GTPase superfamily. Classic translation factor GTPase family. IF-2 subfamily.

It localises to the cytoplasm. Its function is as follows. One of the essential components for the initiation of protein synthesis. Protects formylmethionyl-tRNA from spontaneous hydrolysis and promotes its binding to the 30S ribosomal subunits. Also involved in the hydrolysis of GTP during the formation of the 70S ribosomal complex. The chain is Translation initiation factor IF-2 from Desulforapulum autotrophicum (strain ATCC 43914 / DSM 3382 / VKM B-1955 / HRM2) (Desulfobacterium autotrophicum).